The sequence spans 372 residues: Alanine dehydrogenase 1 (372 aa).

The active site involves His94. NAD(+) is bound at residue 170 to 200 (TYVIFGGGVAATNAANVALGLNAKVIIIELN).

This sequence belongs to the AlaDH/PNT family.

It catalyses the reaction L-alanine + NAD(+) + H2O = pyruvate + NH4(+) + NADH + H(+). Its pathway is amino-acid degradation; L-alanine degradation via dehydrogenase pathway; NH(3) and pyruvate from L-alanine: step 1/1. In terms of biological role, may play a role in cell wall synthesis as L-alanine is an important constituent of the peptidoglycan layer. The sequence is that of Alanine dehydrogenase 1 (ald1) from Staphylococcus aureus (strain MSSA476).